Here is a 567-residue protein sequence, read N- to C-terminus: Phosphoglucomutase-like protein 5 (567 aa).

The interval 1-26 (MEGSPIPVLTVPTAPYEDQRPTGGGG) is disordered. A Phosphothreonine modification is found at threonine 120. Serine 122 carries the post-translational modification Phosphoserine.

This sequence belongs to the phosphohexose mutase family. Interacts with DMD/dystrophin; the interaction is direct. Interacts with UTRN/utrophin.

The protein resides in the cell junction. Its subcellular location is the adherens junction. It is found in the cytoplasm. It localises to the cytoskeleton. The protein localises to the cell membrane. The protein resides in the sarcolemma. In terms of biological role, component of adherens-type cell-cell and cell-matrix junctions. Has no phosphoglucomutase activity in vitro. This chain is Phosphoglucomutase-like protein 5, found in Mus musculus (Mouse).